The sequence spans 489 residues: MTTTEQRLTVESRNGIDYKVADLSLAEFGRKEIRLAEHEMPGLMALRREYAEVAPLKGARISGSLHMTVQTAVLIETLVSLGAEVRWASCNIFSTQDHAAAAVVVGPHGTPEEPKGTPVFAWKGETLEEYWWAAEQMLTWPGEPANMILDDGGDATMLVLRGAQFEKAGVVPPAEDDDSAEYKVFLNLLRERFETDKTKWTKIAESVKGVTEETTTGVLRLYQFEAAGELPFPAINVNDSVTKSKFDNKYGTRHSLIDGINRGTDVLIGGKKVLICGYGDVGKGCAESLAGQGARVQVTEIDPINALQALMDGFDVVTVEQAIGSADIVITSTGNKDIITLDHMKAMKDKAILGNIGHFDNEIDMAALERSGATRINIKPQVDEWTFDDGHSIVLLSEGRLLNLGNATGHPSFVMSNSFSNQVIAQIELWTKNDEYDNAVYRLAKHLDEKVARIHVEALGGTLTKLTKEQAEYINVDVEGPYKPEHYRY.

Substrate-binding residues include threonine 68, aspartate 151, and glutamate 213. An NAD(+)-binding site is contributed by 214–216 (TTT). Substrate-binding residues include lysine 243 and aspartate 247. NAD(+)-binding positions include asparagine 248, 277–282 (GYGDVG), glutamate 300, asparagine 335, 356–358 (IGH), and asparagine 403.

Belongs to the adenosylhomocysteinase family. NAD(+) serves as cofactor.

It is found in the cytoplasm. The enzyme catalyses S-adenosyl-L-homocysteine + H2O = L-homocysteine + adenosine. It participates in amino-acid biosynthesis; L-homocysteine biosynthesis; L-homocysteine from S-adenosyl-L-homocysteine: step 1/1. In terms of biological role, may play a key role in the regulation of the intracellular concentration of adenosylhomocysteine. The chain is Adenosylhomocysteinase from Mycobacterium sp. (strain KMS).